A 582-amino-acid chain; its full sequence is DNA polymerase IV (582 aa).

Positions Asn127–Ala161 are disordered. Over residues Thr135–Asn155 the composition is skewed to basic and acidic residues. Residues Arg360 to Asp369 are involved in ssDNA binding. Mg(2+) contacts are provided by Asp367, Asp369, and Asp502.

This sequence belongs to the DNA polymerase type-X family. As to quaternary structure, interacts with DNL4 subunit of the DNL4-LIF1 complex. It depends on Mg(2+) as a cofactor.

Its subcellular location is the nucleus. The catalysed reaction is DNA(n) + a 2'-deoxyribonucleoside 5'-triphosphate = DNA(n+1) + diphosphate. Its activity is regulated as follows. Stimulated by the interaction with the DNL4-LIF1 complex. Functionally, repair polymerase. Involved in gap-filling in DNA nonhomologous end joining (NHEJ) required for double-strand break repair. Seems to conduct DNA synthesis in a stepwise distributive fashion rather than in a processive fashion as for other DNA polymerases. Preferentially acts upon short gaps formed by the alignment of linear duplexes with complementary single-strand ends. Required for filling gaps that need removal of a 5'- or 3'-terminal mismatch, however lacks nuclease activities. The polypeptide is DNA polymerase IV (POL4) (Saccharomyces cerevisiae (strain ATCC 204508 / S288c) (Baker's yeast)).